A 220-amino-acid chain; its full sequence is MKINQYIDHTLLKPESRQDQIDKLIREAKTYNFASVCINPTWVSYAAKALEGTDIKVCTVIGFPLGATTSAVKAFETKDAISHGADEVDMVINIGQAKSGHFAFVEEDIRAVVEASGDKLVKVIIETCLLTDKEKIKACQAAVAAGADFVKTSTGFSTAGARLDDVRLMRQTVGPDVGVKAAGGTRSLEDAQAFIEAGATRIGTSAGVTIMEGKQTNSGY.

The active-site Proton donor/acceptor is Asp-89. Lys-151 acts as the Schiff-base intermediate with acetaldehyde in catalysis. Lys-180 (proton donor/acceptor) is an active-site residue.

This sequence belongs to the DeoC/FbaB aldolase family. DeoC type 1 subfamily.

It localises to the cytoplasm. It carries out the reaction 2-deoxy-D-ribose 5-phosphate = D-glyceraldehyde 3-phosphate + acetaldehyde. It functions in the pathway carbohydrate degradation; 2-deoxy-D-ribose 1-phosphate degradation; D-glyceraldehyde 3-phosphate and acetaldehyde from 2-deoxy-alpha-D-ribose 1-phosphate: step 2/2. Its function is as follows. Catalyzes a reversible aldol reaction between acetaldehyde and D-glyceraldehyde 3-phosphate to generate 2-deoxy-D-ribose 5-phosphate. The protein is Deoxyribose-phosphate aldolase of Streptococcus mutans serotype c (strain ATCC 700610 / UA159).